Here is a 385-residue protein sequence, read N- to C-terminus: MGERKGQNKYYPPDFNPEKHGSLNRYHNSHPLRERARKLSQGILVIRFEMPYNIWCDGCKNHIGMGVRYNAEKKKVGNYYTTPIYRFRMKCHLCVNYIEMQTDPANCDYVIVSGASRKEERWDMEDNEQVLTTEHEKKEKLETDAMFRLEHGEADRSTLKKALPTLSHIQEAQNAWKDDFALNSMLRRHFREKKKAMQEEEEKDQALQAKASLAIPLVPESEDDRRLAALLRLHTLDSYEDKQRMKRTEIIHRSWFPSAQGPSASSSKASSVLKKLCQGRRPPPSSTGTVGDLGIVRRKSRDVPESPQCAADNSLSEEQRRPPGTTQGSKTLEEAAEASRTSKTSESKRNCSDQAFPLGSSQEDLLNPNTPNASLVADYSDSESE.

The tract at residues 1–26 (MGERKGQNKYYPPDFNPEKHGSLNRY) is disordered. Position 40 is a phosphoserine (S40). A coiled-coil region spans residues 182 to 214 (LNSMLRRHFREKKKAMQEEEEKDQALQAKASLA). The interval 257 to 385 (PSAQGPSASS…VADYSDSESE (129 aa)) is disordered. Over residues 258–271 (SAQGPSASSSKASS) the composition is skewed to low complexity. A Phosphoserine modification is found at S306. Over residues 359–373 (GSSQEDLLNPNTPNA) the composition is skewed to polar residues.

It belongs to the CWC16 family.

The protein localises to the nucleus. May be involved in mRNA splicing. The sequence is that of Probable splicing factor YJU2B (Yju2b) from Mus musculus (Mouse).